Consider the following 273-residue polypeptide: 2,3,4,5-tetrahydropyridine-2,6-dicarboxylate N-succinyltransferase (273 aa).

R106 and D143 together coordinate substrate.

It belongs to the transferase hexapeptide repeat family. As to quaternary structure, homotrimer.

The protein localises to the cytoplasm. The enzyme catalyses (S)-2,3,4,5-tetrahydrodipicolinate + succinyl-CoA + H2O = (S)-2-succinylamino-6-oxoheptanedioate + CoA. It participates in amino-acid biosynthesis; L-lysine biosynthesis via DAP pathway; LL-2,6-diaminopimelate from (S)-tetrahydrodipicolinate (succinylase route): step 1/3. This Wolbachia pipientis wMel protein is 2,3,4,5-tetrahydropyridine-2,6-dicarboxylate N-succinyltransferase.